A 662-amino-acid polypeptide reads, in one-letter code: MGAYLSHPKTDKTSTDQFNELLAVGASSMQGWRNSQEDAHNSILNFDNNTSFFAVYDGHGGAEVAQYCADKLPHFLKNLETYKNGQFEVALKEAFLGFDKTLLDPSIVSILKILAGEHNFVDAEADDYEEEDLAELQEESNLPLNEVLEKYKGLPQKKDLDLKSSDHKENFKMRSPYFRGRRAAALAAEATNKAVMDPSAKPDGSSTSAAAAAAALSADGVANSRNPSNVVNPMAGADSNTTTSINDLSTKNAALKDDSVNDQNEGSNGTDFKHTLVSSSNKKLFATGSNDMTELNQSSKNEFTNSSTSKEFERNINSSQDDEFTDDDADYEENDNVKSPDTSSAESSDCTENDDDGDEDGNEDSDEEETDEDQMANDNFCANMIEEPGKDSGCTAVVCLLQGRDLYVANAGDSRCVISRSGQAIEMSIDHKPEDDEEASRIIKAGGRVTLDGRVNGGLNLSRALGDHAYKTNVTLPAEEQMISALPDIKKLIITPEDEFMVLACDGIWNYMSSEEVVEFVRCRLKDNKKLSTICEELFDNCLAPNTMGDGTGCDNMTAVIVQFKKKLQELQSTIPPNQTEDKLLKTSENVSHSLNDQSASKRCASQNADADDEILEKNNSKRLKTDLEQENIKDRTPSPSNQNEDPTQKAIKEVTIIVSSS.

In terms of domain architecture, PPM-type phosphatase spans 23–564 (AVGASSMQGW…DNMTAVIVQF (542 aa)). Mn(2+)-binding residues include aspartate 57 and glycine 58. 2 disordered regions span residues 219–275 (DGVA…FKHT) and 288–374 (GSND…DEDQ). 3 stretches are compositionally biased toward polar residues: residues 238–252 (DSNT…STKN), 261–275 (NDQN…FKHT), and 288–319 (GSND…INSS). Phosphoserine is present on residues serine 289 and serine 306. Positions 320–334 (QDDEFTDDDADYEEN) are enriched in acidic residues. Over residues 337 to 347 (VKSPDTSSAES) the composition is skewed to polar residues. The span at 349–374 (DCTENDDDGDEDGNEDSDEEETDEDQ) shows a compositional bias: acidic residues. 2 residues coordinate Mn(2+): aspartate 506 and aspartate 555. The segment covering 591–609 (VSHSLNDQSASKRCASQNA) has biased composition (polar residues). The disordered stretch occupies residues 591-662 (VSHSLNDQSA…KEVTIIVSSS (72 aa)). Residues serine 592, serine 594, and serine 599 each carry the phosphoserine modification. A compositionally biased stretch (basic and acidic residues) spans 616 to 637 (LEKNNSKRLKTDLEQENIKDRT). At threonine 637 the chain carries Phosphothreonine. Phosphoserine is present on residues serine 639 and serine 641.

The protein belongs to the PP2C family. It depends on Mg(2+) as a cofactor. The cofactor is Mn(2+).

The catalysed reaction is O-phospho-L-seryl-[protein] + H2O = L-seryl-[protein] + phosphate. The enzyme catalyses O-phospho-L-threonyl-[protein] + H2O = L-threonyl-[protein] + phosphate. The protein is Probable protein phosphatase CG10417 of Drosophila melanogaster (Fruit fly).